Reading from the N-terminus, the 37-residue chain is Large ribosomal subunit protein bL36A (37 aa).

The protein belongs to the bacterial ribosomal protein bL36 family.

The polypeptide is Large ribosomal subunit protein bL36A (Actinobacillus pleuropneumoniae serotype 3 (strain JL03)).